Here is an 886-residue protein sequence, read N- to C-terminus: MKILKSLVLLVLFIVMPAKAHDTFSWMSTSFSGLKGLFGCLEVPEFTSFQESNIGINLSKAGTWQSTGHTVEKGKLLKINWSIAGVTTEPRKYLVLYRIDPRFSTPQVFIKTYNYSKLQFEALGFPRFVTNSNSSIPGAIPPDKELDALSFTKMSDSIKYYARNNVKIEVKAGDVVNISLVSKDNFFTSNTLDNILTEELDSSIFAASALYTQSNLGNFDNRIIYASAKEVCDIIDPSRDPNKPSGCSGTGATTKYKSINSNEALVGKPMMIGAVHNFMGLINSCPEHSGINTRPACYYDQGRGMIIKVGGQVIKGRDQSFVKSGRNSFIYYQATRNGIMDFTSDWQVNNMFSNSVLMSDWIRRFLNYPSFIDYINKNDWSANFLYFGRYSMIVEIGNGANSISSDVQQNINLEYLITYDGTLPDPSIRGTPVDYNFSADAPKDGYLWLRVVNPNSNIQGVVSVNYANYTGTTWFSDIVYNGAIKPITDQFRTFSKNFYIKLIKNSAVQNIAKGSLTLYVIIFGLMFVAGTLKLTAIEVITRICKIAIVAFLIREESWSFFNTYFFSVFTDGIDFFITNVVGATSSRSNIFGFIDPIFDKYTNGRIWGLLFIELLQIHNGLAFIAIITIYSLITYFRAILEVIIGYIIAFIGVTVMISLAPFFIILMLFEKTKSLFDNWISTLLSYVVQPTILLIFFLLIDQVLSEQLLKVVVRACWDTLIPIKIGLDLTNLSIPINFSFTLPFLPGIPFYVPDVPEINRSNIFNNNTNTFLVLFTTALLFYVYCLMSYGLVTFVNIVVGMLTNVTPARISGNYQARSDPVGAVMQDIGSVTTPIKNASMVPARIFKDKIIDQNYKAKKLEGGVEFTNKFFAKRNDVTKKEEGVRE.

The signal sequence occupies residues 1–20 (MKILKSLVLLVLFIVMPAKA). 6 helical membrane-spanning segments follow: residues 520–540 (VIIFGLMFVAGTLKLTAIEVI), 563–583 (TYFFSVFTDGIDFFITNVVGA), 609–629 (LLFIELLQIHNGLAFIAIITI), 647–667 (IIAFIGVTVMISLAPFFIILM), 680–700 (ISTLLSYVVQPTILLIFFLLI), and 771–791 (FLVLFTTALLFYVYCLMSYGL).

Belongs to the TrbL/VirB6 family.

Its subcellular location is the cell membrane. This is an uncharacterized protein from Rickettsia typhi (strain ATCC VR-144 / Wilmington).